Reading from the N-terminus, the 420-residue chain is D-tagatose-1,6-bisphosphate aldolase subunit GatZ (420 aa).

This sequence belongs to the GatZ/KbaZ family. GatZ subfamily. As to quaternary structure, forms a complex with GatY.

It functions in the pathway carbohydrate metabolism; D-tagatose 6-phosphate degradation; D-glyceraldehyde 3-phosphate and glycerone phosphate from D-tagatose 6-phosphate: step 2/2. Its function is as follows. Component of the tagatose-1,6-bisphosphate aldolase GatYZ that is required for full activity and stability of the Y subunit. Could have a chaperone-like function for the proper and stable folding of GatY. When expressed alone, GatZ does not show any aldolase activity. Is involved in the catabolism of galactitol. In Escherichia coli (strain SE11), this protein is D-tagatose-1,6-bisphosphate aldolase subunit GatZ.